Consider the following 437-residue polypeptide: Xylose isomerase (437 aa).

Catalysis depends on residues H101 and D104. Mg(2+) contacts are provided by E232, E268, H271, D296, D307, D309, and D339.

Belongs to the xylose isomerase family. As to quaternary structure, homotetramer. Requires Mg(2+) as cofactor.

It localises to the cytoplasm. The enzyme catalyses alpha-D-xylose = alpha-D-xylulofuranose. In Mannheimia succiniciproducens (strain KCTC 0769BP / MBEL55E), this protein is Xylose isomerase.